Here is a 259-residue protein sequence, read N- to C-terminus: 5'-nucleotidase SurE (259 aa).

Residues aspartate 8, aspartate 9, serine 40, and asparagine 92 each coordinate a divalent metal cation.

Belongs to the SurE nucleotidase family. A divalent metal cation is required as a cofactor.

Its subcellular location is the cytoplasm. The catalysed reaction is a ribonucleoside 5'-phosphate + H2O = a ribonucleoside + phosphate. Functionally, nucleotidase that shows phosphatase activity on nucleoside 5'-monophosphates. The polypeptide is 5'-nucleotidase SurE (Stenotrophomonas maltophilia (strain R551-3)).